The following is a 352-amino-acid chain: Dihydroorotate dehydrogenase (quinone) (352 aa).

Residues 68 to 72 (AGFDK) and Thr-92 each bind FMN. Lys-72 provides a ligand contact to substrate. 117–121 (NAMGF) provides a ligand contact to substrate. Positions 146 and 179 each coordinate FMN. Residue Asn-179 participates in substrate binding. Ser-182 acts as the Nucleophile in catalysis. Asn-184 contacts substrate. Positions 215 and 243 each coordinate FMN. A substrate-binding site is contributed by 244–245 (NT). FMN contacts are provided by residues Gly-263, Gly-292, and 313–314 (YS).

This sequence belongs to the dihydroorotate dehydrogenase family. Type 2 subfamily. In terms of assembly, monomer. FMN is required as a cofactor.

The protein resides in the cell membrane. It carries out the reaction (S)-dihydroorotate + a quinone = orotate + a quinol. The protein operates within pyrimidine metabolism; UMP biosynthesis via de novo pathway; orotate from (S)-dihydroorotate (quinone route): step 1/1. In terms of biological role, catalyzes the conversion of dihydroorotate to orotate with quinone as electron acceptor. In Sulfurimonas denitrificans (strain ATCC 33889 / DSM 1251) (Thiomicrospira denitrificans (strain ATCC 33889 / DSM 1251)), this protein is Dihydroorotate dehydrogenase (quinone).